The chain runs to 93 residues: MDGIKYAVFTEKSIRLLGKNQYTSNVESGSTRTEIKHWVELFFGVKVIAMNSHRLPGKGRRMGPIMGHTMHYRRMIITLQPGYSIPPLRKKRT.

The protein belongs to the universal ribosomal protein uL23 family. Part of the 50S ribosomal subunit.

The protein resides in the plastid. It is found in the chloroplast. Binds to 23S rRNA. This is Large ribosomal subunit protein uL23cz/uL23cy (rpl23-A) from Jasminum nudiflorum (Winter jasmine).